A 258-amino-acid chain; its full sequence is Aspartate/glutamate leucyltransferase (258 aa).

The protein belongs to the R-transferase family. Bpt subfamily.

It is found in the cytoplasm. The catalysed reaction is N-terminal L-glutamyl-[protein] + L-leucyl-tRNA(Leu) = N-terminal L-leucyl-L-glutamyl-[protein] + tRNA(Leu) + H(+). The enzyme catalyses N-terminal L-aspartyl-[protein] + L-leucyl-tRNA(Leu) = N-terminal L-leucyl-L-aspartyl-[protein] + tRNA(Leu) + H(+). Its function is as follows. Functions in the N-end rule pathway of protein degradation where it conjugates Leu from its aminoacyl-tRNA to the N-termini of proteins containing an N-terminal aspartate or glutamate. This is Aspartate/glutamate leucyltransferase from Rhizobium johnstonii (strain DSM 114642 / LMG 32736 / 3841) (Rhizobium leguminosarum bv. viciae).